We begin with the raw amino-acid sequence, 102 residues long: Small ribosomal subunit protein bS18c (102 aa).

Basic residues predominate over residues 1-19 (MDKTKRPLRKSKRSFRRRL). The interval 1 to 26 (MDKTKRPLRKSKRSFRRRLPPPIGSG) is disordered.

This sequence belongs to the bacterial ribosomal protein bS18 family. In terms of assembly, part of the 30S ribosomal subunit.

It is found in the plastid. It localises to the chloroplast. The sequence is that of Small ribosomal subunit protein bS18c from Piper cenocladum (Ant piper).